A 185-amino-acid polypeptide reads, in one-letter code: Threonylcarbamoyl-AMP synthase (185 aa).

Positions 4–185 (SWRVQQAARE…LATGEVVRPG (182 aa)) constitute a YrdC-like domain.

The protein belongs to the SUA5 family. TsaC subfamily.

The protein localises to the cytoplasm. The enzyme catalyses L-threonine + hydrogencarbonate + ATP = L-threonylcarbamoyladenylate + diphosphate + H2O. Its function is as follows. Required for the formation of a threonylcarbamoyl group on adenosine at position 37 (t(6)A37) in tRNAs that read codons beginning with adenine. Catalyzes the conversion of L-threonine, HCO(3)(-)/CO(2) and ATP to give threonylcarbamoyl-AMP (TC-AMP) as the acyladenylate intermediate, with the release of diphosphate. This is Threonylcarbamoyl-AMP synthase from Pseudomonas entomophila (strain L48).